We begin with the raw amino-acid sequence, 137 residues long: Interferon-induced transmembrane protein 3 (137 aa).

The Cytoplasmic portion of the chain corresponds to 1-57 (MNHTSQAFITAASGGQPPNYERIKEEYEVAEMGAPHGSASVRTTVINMPREVSVPDH). Residue Tyr-20 is modified to Phosphotyrosine. Residue Lys-24 forms a Glycyl lysine isopeptide (Lys-Gly) (interchain with G-Cter in ubiquitin) linkage. Tyr-27 carries the phosphotyrosine modification. The segment at residues 58-78 (VVWSLFNTLFMNFCCLGFIAY) is an intramembrane region (helical). The tract at residues 60-93 (WSLFNTLFMNFCCLGFIAYAYSVKSRDRKMVGDV) is interaction with SPP1. 2 S-palmitoyl cysteine lipidation sites follow: Cys-71 and Cys-72. Residues 79 to 109 (AYSVKSRDRKMVGDVTGAQAYASTAKCLNIS) lie on the Cytoplasmic side of the membrane. Glycyl lysine isopeptide (Lys-Gly) (interchain with G-Cter in ubiquitin) cross-links involve residues Lys-83, Lys-88, and Lys-104. A lipid anchor (S-palmitoyl cysteine) is attached at Cys-105. An interaction with VAPA region spans residues 108–133 (ISTLVLSILMVVITIVSVIIIVLNAQ). Residues 110–130 (TLVLSILMVVITIVSVIIIVL) form a helical membrane-spanning segment. Residues 131–137 (NAQNLHT) lie on the Extracellular side of the membrane.

It belongs to the CD225/Dispanin family. In terms of assembly, interacts with ATP6V0B. Interacts with CD81. Interacts with SPP1; the interaction reduces OPN expression. Interacts with BRI3. Post-translationally, polyubiquitinated with both 'Lys-48' and 'Lys-63' linkages. Ubiquitination negatively regulates antiviral activity. Lys-24 is the most prevalent ubiquitination site. Phosphorylation at Tyr-20 is required for endosomal and lysosomal location. Expressed in acinar cell. Predominantly expressed in nascent primordial germ cells, as well as in gonadal germ cells.

It is found in the cell membrane. It localises to the late endosome membrane. The protein localises to the early endosome membrane. Its subcellular location is the lysosome membrane. The protein resides in the cytoplasm. It is found in the perinuclear region. In terms of biological role, IFN-induced antiviral protein which disrupts intracellular cholesterol homeostasis. Inhibits the entry of viruses to the host cell cytoplasm by preventing viral fusion with cholesterol depleted endosomes. May inactivate new enveloped viruses which buds out of the infected cell, by letting them go out with a cholesterol depleted membrane. Active against multiple viruses, including influenza A virus, SARS coronaviruses (SARS-CoV and SARS-CoV-2), Marburg virus (MARV), Ebola virus (EBOV), Dengue virus (DNV), West Nile virus (WNV), human immunodeficiency virus type 1 (HIV-1), hepatitis C virus (HCV) and vesicular stomatitis virus (VSV). Can inhibit: influenza virus hemagglutinin protein-mediated viral entry, MARV and EBOV GP1,2-mediated viral entry, SARS-CoV and SARS-CoV-2 S protein-mediated viral entry and VSV G protein-mediated viral entry. Plays a critical role in the structural stability and function of vacuolar ATPase (v-ATPase). Establishes physical contact with the v-ATPase of endosomes which is critical for proper clathrin localization and is also required for the function of the v-ATPase to lower the pH in phagocytic endosomes thus establishing an antiviral state. In hepatocytes, IFITM proteins act in a coordinated manner to restrict HCV infection by targeting the endocytosed HCV virion for lysosomal degradation. IFITM2 and IFITM3 display anti-HCV activity that may complement the anti-HCV activity of IFITM1 by inhibiting the late stages of HCV entry, possibly in a coordinated manner by trapping the virion in the endosomal pathway and targeting it for degradation at the lysosome. Exerts opposing activities on SARS-CoV-2, including amphipathicity-dependent restriction of virus at endosomes and amphipathicity-independent enhancement of infection at the plasma membrane. This chain is Interferon-induced transmembrane protein 3, found in Mus musculus (Mouse).